We begin with the raw amino-acid sequence, 497 residues long: NADH-ubiquinone oxidoreductase chain 4 (497 aa).

Transmembrane regions (helical) follow at residues 3-23, 42-62, 94-114, 122-142, 144-164, 178-198, 220-240, 250-270, 276-296, 313-333, 340-360, 374-394, 418-438, and 463-483; these read FLLYYTLFISFMLWLAALLII, LFFSFFQFILIIFFWILSDNI, ISLLFLLLTFFLTPICILISW, NSFIICLIFITFILFNIFCVL, LVFFYIFFESILIPMFILIGV, LFFYTLLGSLLMLLGILVIYS, ILWASFFFAFCVKVPLFPFHI, PTVGSVILAGVLLKLGTYGLL, IFCDATYFFLPLVYTLCLLGI, IAYASVSHMSFVILGLFTSNI, VFLMLSHGIVSSGLFFCIGCV, GLVSTMPIFSLCLFILILSNI, FAALIATFSIILTAVYSIWLY, and VVGFIFCFITILFGLKGSYII.

The protein belongs to the complex I subunit 4 family.

The protein localises to the mitochondrion membrane. The catalysed reaction is a ubiquinone + NADH + 5 H(+)(in) = a ubiquinol + NAD(+) + 4 H(+)(out). Core subunit of the mitochondrial membrane respiratory chain NADH dehydrogenase (Complex I) that is believed to belong to the minimal assembly required for catalysis. Complex I functions in the transfer of electrons from NADH to the respiratory chain. The immediate electron acceptor for the enzyme is believed to be ubiquinone. This is NADH-ubiquinone oxidoreductase chain 4 (ND4) from Acanthamoeba castellanii (Amoeba).